The primary structure comprises 904 residues: DNA mismatch repair protein MutS (904 aa).

Position 655-662 (655-662 (GPNMGGKS)) interacts with ATP.

This sequence belongs to the DNA mismatch repair MutS family.

Functionally, this protein is involved in the repair of mismatches in DNA. It is possible that it carries out the mismatch recognition step. This protein has a weak ATPase activity. In Rhizorhabdus wittichii (strain DSM 6014 / CCUG 31198 / JCM 15750 / NBRC 105917 / EY 4224 / RW1) (Sphingomonas wittichii), this protein is DNA mismatch repair protein MutS.